Reading from the N-terminus, the 242-residue chain is 1-(5-phosphoribosyl)-5-[(5-phosphoribosylamino)methylideneamino] imidazole-4-carboxamide isomerase (242 aa).

The active-site Proton acceptor is the D8. The Proton donor role is filled by D129.

Belongs to the HisA/HisF family.

It localises to the cytoplasm. It carries out the reaction 1-(5-phospho-beta-D-ribosyl)-5-[(5-phospho-beta-D-ribosylamino)methylideneamino]imidazole-4-carboxamide = 5-[(5-phospho-1-deoxy-D-ribulos-1-ylimino)methylamino]-1-(5-phospho-beta-D-ribosyl)imidazole-4-carboxamide. Its pathway is amino-acid biosynthesis; L-histidine biosynthesis; L-histidine from 5-phospho-alpha-D-ribose 1-diphosphate: step 4/9. The polypeptide is 1-(5-phosphoribosyl)-5-[(5-phosphoribosylamino)methylideneamino] imidazole-4-carboxamide isomerase (Erythrobacter litoralis (strain HTCC2594)).